Consider the following 945-residue polypeptide: Valine--tRNA ligase (945 aa).

The short motif at 42–52 (PNVTGTLHMGH) is the 'HIGH' region element. The 'KMSKS' region signature appears at 552 to 556 (KMSKS). Lysine 555 contacts ATP. The stretch at 879–945 (DKAAETARLS…VQNQLAKLKD (67 aa)) forms a coiled coil.

This sequence belongs to the class-I aminoacyl-tRNA synthetase family. ValS type 1 subfamily. In terms of assembly, monomer.

The protein resides in the cytoplasm. It catalyses the reaction tRNA(Val) + L-valine + ATP = L-valyl-tRNA(Val) + AMP + diphosphate. In terms of biological role, catalyzes the attachment of valine to tRNA(Val). As ValRS can inadvertently accommodate and process structurally similar amino acids such as threonine, to avoid such errors, it has a 'posttransfer' editing activity that hydrolyzes mischarged Thr-tRNA(Val) in a tRNA-dependent manner. The protein is Valine--tRNA ligase of Neisseria meningitidis serogroup B (strain ATCC BAA-335 / MC58).